The chain runs to 146 residues: Protein US8.5 (146 aa).

The tract at residues 63 to 93 is disordered; the sequence is LIAIADARGDPPETLPPGAGGAAPACRRPPR. Positions 84–93 are enriched in low complexity; it reads AAPACRRPPR.

This sequence belongs to the HHV-1 US8.5 protein family. Phosphorylated.

The protein localises to the host nucleus. The protein resides in the host nucleolus. This Human herpesvirus 2 (strain HG52) (HHV-2) protein is Protein US8.5.